A 255-amino-acid polypeptide reads, in one-letter code: uncharacterized protein (255 aa).

Positions 1 to 23 (MKRLNKLVLGINLLFLVISITAG) are cleaved as a signal peptide. Residue C24 is the site of N-palmitoyl cysteine attachment. C24 carries the S-diacylglycerol cysteine lipid modification.

Belongs to the staphylococcal tandem lipoprotein family.

It is found in the cell membrane. This is an uncharacterized protein from Staphylococcus aureus (strain MRSA252).